The primary structure comprises 283 residues: Circadian clock oscillator protein KaiA (283 aa).

The tract at residues 3 to 133 (QSTALTICGL…VKLCPGCAVP (131 aa)) is psR domain, binds oxidized quinones. Residues 3–163 (QSTALTICGL…RLSQKLKERL (161 aa)) form the KaiA N-terminal domain. Residues 164–172 (GYLGVYYKR) form a flexible linker region. In terms of domain architecture, KaiA C-terminal spans 173–281 (DTAFFFRRMS…CEMYRRSIPR (109 aa)).

In terms of assembly, homodimer. The KaiABC complex composition changes during the circadian cycle to control KaiC phosphorylation. Complexes KaiC(6), KaiA(2-4):KaiC(6), KaiB(6):KaiC(6) and KaiC(6):KaiB(6):KaiA(12) are among the most important forms, many form cooperatively. KaiA and CikA bind to the same region of the KaiB(fs) form and therefore compete.

Functionally, key component of the KaiABC oscillator complex, which constitutes the main circadian regulator in cyanobacteria. Complex composition changes during the circadian cycle to control KaiC phosphorylation. KaiA stimulates KaiC autophosphorylation, while KaiB sequesters KaiA, leading to KaiC autodephosphorylation. KaiA binding to the KaiC CII domain during the subjective day yields KaiA(2-4):KaiC(6) complexes which stimulate KaiC autophosphorylation. Phospho-Ser-431 KaiC accumulation triggers binding of KaiB during the subjective night to form the KaiB(6):KaiC(6) complex, leading to changes in the output regulators CikA and SasA. KaiB(6):KaiC(6) formation exposes a site for KaiA binding on KaiB that sequesters KaiA from KaiC's CII domain, making the KaiC(6):KaiB(6):KaiA(12) complex resulting in KaiC autodephosphorylation. Complete dephosphorylation of KaiC leads to dissociation of KaiA(2):KaiB(1), completing 1 cycle of the Kai oscillator. Binds oxidized quinones via the N-terminal PsR domain, allowing it to sense redox changes and possibly mediate clock input. The sequence is that of Circadian clock oscillator protein KaiA from Thermostichus vulcanus (Synechococcus vulcanus).